Consider the following 268-residue polypeptide: MLQYPHINPVALQLGPIKIHWYGLMYLLGIFAGWYLTRYRAKVKPWAPIKPEQVGDLTFYVALGVILGGRIGYIIFYNLPYYFHNPSQMFFLWDGGMSFHGGFIGVLIAFALFARKIGANFFDLGEFVAPVIPIGLGAGRIGNFINGELWGKVTDSPLGMVFPTGGPLPRYPSQLFEFFFEGVVLFSVLWLVTIKKRPRYLVLGLFMFLYGCARFICEFFRQPDPQYGYIFFNWMTMGQILSIPMILLGAVILIAVFIKTRKNKCENI.

The next 4 membrane-spanning stretches (helical) occupy residues 14–34, 57–77, 90–110, and 117–137; these read LGPI…FAGW, LTFY…IIFY, FFLW…LIAF, and IGAN…IGLG. Arg-140 contacts a 1,2-diacyl-sn-glycero-3-phospho-(1'-sn-glycerol). The next 3 membrane-spanning stretches (helical) occupy residues 174–194, 200–220, and 238–258; these read QLFE…LVTI, YLVL…CEFF, and GQIL…AVFI.

Belongs to the Lgt family.

It is found in the cell inner membrane. It carries out the reaction L-cysteinyl-[prolipoprotein] + a 1,2-diacyl-sn-glycero-3-phospho-(1'-sn-glycerol) = an S-1,2-diacyl-sn-glyceryl-L-cysteinyl-[prolipoprotein] + sn-glycerol 1-phosphate + H(+). It functions in the pathway protein modification; lipoprotein biosynthesis (diacylglyceryl transfer). Catalyzes the transfer of the diacylglyceryl group from phosphatidylglycerol to the sulfhydryl group of the N-terminal cysteine of a prolipoprotein, the first step in the formation of mature lipoproteins. The chain is Phosphatidylglycerol--prolipoprotein diacylglyceryl transferase from Francisella tularensis subsp. novicida (strain U112).